The following is a 198-amino-acid chain: Ribonuclease HII 1 (198 aa).

One can recognise an RNase H type-2 domain in the interval 7–196 (ELTAGVDEAG…VRAALARAAA (190 aa)). A divalent metal cation is bound by residues D13, E14, and D105.

It belongs to the RNase HII family. Mn(2+) serves as cofactor. Mg(2+) is required as a cofactor.

It is found in the cytoplasm. The catalysed reaction is Endonucleolytic cleavage to 5'-phosphomonoester.. Functionally, endonuclease that specifically degrades the RNA of RNA-DNA hybrids. This is Ribonuclease HII 1 from Methylibium petroleiphilum (strain ATCC BAA-1232 / LMG 22953 / PM1).